The primary structure comprises 188 residues: uncharacterized protein (188 aa).

Basic and acidic residues predominate over residues 1 to 15 (MVSSKDKIKEELKQE). The segment at 1 to 21 (MVSSKDKIKEELKQEEPEENV) is disordered.

This is an uncharacterized protein from Saccharolobus islandicus (Sulfolobus islandicus).